The sequence spans 586 residues: Paxillin (586 aa).

Met-1 bears the N-acetylmethionine mark. An LD motif 1 motif is present at residues 3–15; the sequence is DLDALLADLESTT. A disordered region spans residues 13-138; sequence STTSHISKRP…PSPTVMSSSL (126 aa). Tyr-31 is modified (phosphotyrosine; by PTK6). Over residues 45–54 the composition is skewed to pro residues; that stretch reads VPPPVPPPPS. 2 positions are modified to phosphoserine: Ser-83 and Ser-85. Low complexity predominate over residues 86–98; the sequence is PIYSSSTKNSSAS. A Phosphotyrosine modification is found at Tyr-88. Phosphoserine is present on Ser-106. Tyr-118 is modified (phosphotyrosine; by PTK6). Residues Ser-119, Ser-126, and Ser-130 each carry the phosphoserine modification. The span at 121-137 shows a compositional bias: polar residues; sequence PNKQKSAEPSPTVMSSS. Thr-132 is modified (phosphothreonine). 3 positions are modified to phosphoserine: Ser-137, Ser-140, and Ser-143. Positions 144-156 match the LD motif 2 motif; the sequence is ELDRLLLELNAVQ. Tyr-210 is subject to Phosphotyrosine. The disordered stretch occupies residues 220–241; sequence GGKAGPLMKEKPKRNGGRGLED. The short motif at 245-257 is the LD motif 3 element; sequence SVESLLDELENSV. Ser-259 carries the post-translational modification Phosphoserine. The interval 266–290 is disordered; that stretch reads VNQGEMSSPQRVTSSQQQTRISASS. Ser-273 carries the post-translational modification Phosphoserine; by CDK5. Residues Ser-279, Ser-287, Ser-290, Ser-301, Ser-317, Ser-327, and Ser-335 each carry the phosphoserine modification. A required for binding to PARVA and ILK region spans residues 291 to 310; the sequence is ATRELDELMASLSDFKFMAQ. The LD motif 4 motif lies at 294–305; it reads ELDELMASLSDF. The disordered stretch occupies residues 309 to 329; sequence AQGKTGSSSPPGGLSKPGSQL. Positions 310-329 are enriched in low complexity; that stretch reads QGKTGSSSPPGGLSKPGSQL. The LD motif 5 signature appears at 328 to 340; that stretch reads QLDSMLGSLQSDL. LIM zinc-binding domains follow at residues 353-403, 412-462, and 471-521; these read CGAC…CEKD, CYYC…CRKD, and CGGC…CEVH. The residue at position 528 (Ser-528) is a Phosphoserine. Residues 530 to 580 form the LIM zinc-binding 4 domain; sequence CSGCQKPITGRCITAMAKKFHPEHFVCAFCLKQLNKGTFKEQNDKPYCQSC.

This sequence belongs to the paxillin family. As to quaternary structure, interacts in vitro with VCL/vinculin as well as to the SH3 domain of SRC and, when tyrosine phosphorylated, to the SH2 domain of CRK. Interacts with GIT1. Interacts with NUDT16L1/SDOS. Interacts with PTK2/FAK1. Interacts with PTK2B/PYK2. Interacts with ASAP2. Interacts with unphosphorylated ITGA4. Interacts with RNF5. Interacts with PDCD10. Interacts with NEK3, the interaction is prolactin-dependent. Interacts with PTK6. Interacts with TGFB1I1. Interacts with SORBS1. Interacts with PARVB. Interacts (via LD motif 4) with PARVA/PARVIN. Interacts (via LD motif 4) with ILK. Interacts (via cytoplasmic domain) with CEACAM1; the interaction is phosphotyrosyl-dependent. Interacts with LIMA1; this complex stabilizes actin dynamics. Interacts with CD36 (via C-terminus). Interacts with TRIM15. Interacts with PAK4; PAK4 acts as a scaffold to suppport PAXI phosphorylation at Ser-301. In terms of processing, phosphorylated by MAPK1/ERK2. Phosphorylated on tyrosine residues during integrin-mediated cell adhesion, embryonic development, fibroblast transformation and following stimulation of cells by mitogens. Phosphorylation at Ser-273 by CDK5 reduces its interaction with PTK2/FAK1 in matrix-cell focal adhesions (MCFA) during oligodendrocytes (OLs) differentiation. Phosphorylation at Tyr-31 and Tyr-118 by PTK6 promote the activation of RAC1 via CRK/CrKII, thereby promoting migration and invasion. Phosphorylation at Ser-279 by SLK is required for PXN redistribution and cell motility. Phosphorylation at Ser-301 promotes focal adhesion disassembly during cell migration.

It localises to the cytoplasm. The protein resides in the cytoskeleton. It is found in the cell junction. The protein localises to the focal adhesion. Its subcellular location is the cell cortex. Cytoskeletal protein involved in actin-membrane attachment at sites of cell adhesion to the extracellular matrix (focal adhesion). Recruits other proteins such as TRIM15 to focal adhesion. This Rattus norvegicus (Rat) protein is Paxillin.